Consider the following 313-residue polypeptide: D-apiose import binding protein (313 aa).

An N-terminal signal peptide occupies residues 1 to 26 (MKLTRRLTLAAFASALALGTAMPAFA). D-apiofuranose-binding positions include N39, 115–116 (DR), 162–164 (DTN), R168, N218, D243, and Q263.

This sequence belongs to the bacterial solute-binding protein 2 family.

It localises to the periplasm. Its function is as follows. Part of an ABC transporter complex involved in D-apiose import. Binds D-apiose, D-ribose and D-ribulose. The chain is D-apiose import binding protein from Rhizobium etli (strain ATCC 51251 / DSM 11541 / JCM 21823 / NBRC 15573 / CFN 42).